Consider the following 301-residue polypeptide: Rhodopsin (301 aa).

Topologically, residues 1-18 are extracellular; sequence LHMIHLHWYQYPPMNPMM. A helical membrane pass occupies residues 19-43; that stretch reads YPLLLIFMLFTGILCLAGNFVTIWV. Over 44–55 the chain is Cytoplasmic; sequence FMNTKSLRTPAN. Residues 56 to 78 traverse the membrane as a helical segment; it reads LLVVNLAMSDFLMMFTMFPPMMV. Topologically, residues 79–92 are extracellular; that stretch reads TCYYHTWTLGPTFC. Cysteine 92 and cysteine 169 are oxidised to a cystine. The helical transmembrane segment at 93–115 threads the bilayer; the sequence is QVYGFLGNLCGCASIWTMVFITF. The short motif at 116–118 is the 'Ionic lock' involved in activated form stabilization element; the sequence is DRY. Topologically, residues 116–134 are cytoplasmic; sequence DRYNVIVKGVAGEPLSTKK. The helical transmembrane segment at 135 to 155 threads the bilayer; that stretch reads ASLWILIVWVLSLAWCMAPFF. At 156-182 the chain is on the extracellular side; the sequence is GWNRYVPEGNLTGCGTDYLSEDILSRS. A glycan (N-linked (GlcNAc...) asparagine) is linked at asparagine 165. Residues 183–204 form a helical membrane-spanning segment; that stretch reads YLYIYSTWVYFLPLTITIYCYV. Over 205–245 the chain is Cytoplasmic; it reads FIIKAVAAHEKGMRDQAKKMGIKSLRNEEAQKTSAECRLAK. A helical membrane pass occupies residues 246 to 267; that stretch reads IAMTTVALWFIAWTPYLLINWV. The Extracellular segment spans residues 268–278; sequence GMFARSYLSPV. Residues 279 to 300 form a helical membrane-spanning segment; sequence YTIWGYVFAKANAVYNPIVYAI. The residue at position 288 (lysine 288) is an N6-(retinylidene)lysine.

The protein belongs to the G-protein coupled receptor 1 family. Opsin subfamily. In terms of assembly, homodimer. Interacts with GNAQ. Contains one covalently linked retinal chromophore.

It localises to the cell projection. The protein resides in the rhabdomere membrane. In terms of biological role, photoreceptor required for image-forming vision at low light intensity. Can use both retinal and 3-dehydroretinal as visual pigment. Light-induced isomerization of 11-cis to all-trans retinal triggers a conformational change that activates signaling via G-proteins. Signaling via GNAQ probably mediates the activation of phospholipase C. This is Rhodopsin (RHO) from Procambarus milleri (Miami cave crayfish).